Reading from the N-terminus, the 148-residue chain is NADH-ubiquinone oxidoreductase chain 3 (148 aa).

3 helical membrane-spanning segments follow: residues 19–39 (FYMI…YIIT), 70–90 (FILI…ILPY), and 99–119 (IYGL…FIIE).

Belongs to the complex I subunit 3 family.

The protein resides in the mitochondrion membrane. It carries out the reaction a ubiquinone + NADH + 5 H(+)(in) = a ubiquinol + NAD(+) + 4 H(+)(out). Core subunit of the mitochondrial membrane respiratory chain NADH dehydrogenase (Complex I) that is believed to belong to the minimal assembly required for catalysis. Complex I functions in the transfer of electrons from NADH to the respiratory chain. The immediate electron acceptor for the enzyme is believed to be ubiquinone. This chain is NADH-ubiquinone oxidoreductase chain 3 (ND3), found in Wickerhamomyces canadensis (Yeast).